A 1315-amino-acid chain; its full sequence is DNA-directed RNA polymerase subunit beta' (1315 aa).

Zn(2+) contacts are provided by cysteine 60, cysteine 62, cysteine 75, and cysteine 78. Mg(2+) contacts are provided by aspartate 535, aspartate 537, and aspartate 539. Residues cysteine 890, cysteine 967, cysteine 974, and cysteine 977 each contribute to the Zn(2+) site.

Belongs to the RNA polymerase beta' chain family. As to quaternary structure, the RNAP catalytic core consists of 2 alpha, 1 beta, 1 beta' and 1 omega subunit. When a sigma factor is associated with the core the holoenzyme is formed, which can initiate transcription. It depends on Mg(2+) as a cofactor. Zn(2+) is required as a cofactor.

The enzyme catalyses RNA(n) + a ribonucleoside 5'-triphosphate = RNA(n+1) + diphosphate. DNA-dependent RNA polymerase catalyzes the transcription of DNA into RNA using the four ribonucleoside triphosphates as substrates. The protein is DNA-directed RNA polymerase subunit beta' of Mycobacterium sp. (strain MCS).